A 342-amino-acid chain; its full sequence is uncharacterized protein (342 aa).

This sequence belongs to the cycloisomerase 2 family.

This is an uncharacterized protein from Staphylococcus aureus (strain N315).